A 614-amino-acid chain; its full sequence is MGGSNLHSAWAQLFVRALAQAGVRDLVLCPGSRSTPLAIAAMESEEVRCHSVVDERAAAFFALGQARVTGRPSVFVCTSGTAGAHALPAIIEAHQSFTPLIAITADRPWELADAAAAQTIDQTKLFGDHVRHFAELGLPDPSPLALRAVTRIAAQAVTRALSPTPGAVHINARFRKPLEPVDATGPEPWQAEWEALMRRAGTRVVSARAGVDGRAIEELAARCARAERGLIVCGPAESREDDARARRAVLALSRATGFPVLAEGTSQICFGGLTEGVVMPASFDSFLRAPEFRAANAPDLILELGAPPTSAGYATYIAEHASARRVVVSSHGWNDPTSAAAALVMGEPVEVCEALAARLGGAALSLGRGRRDWAATFARAGEIAAGHAARACAGDELTEGAIARMVASACPAGSLLAIGNSMPVRDLDTYCPPSARALRVLHQRGASGIDGLVSAAAGARVAAAAPVTLLLGDLSLLHDLTGLLLAAKATGDGRAPLVIVVVQNDGGRIFEHLPIARRGAALLERCFTMPQHLDFAPAAAMFGLAYERAGTAGELARALAAGYQRAGATLIEAVVPPHDGAARVARLWSDVRRDVAALGSAPAADGAAADLQTP.

The protein belongs to the TPP enzyme family. MenD subfamily. Homodimer. It depends on Mg(2+) as a cofactor. The cofactor is Mn(2+). Thiamine diphosphate serves as cofactor.

It carries out the reaction isochorismate + 2-oxoglutarate + H(+) = 5-enolpyruvoyl-6-hydroxy-2-succinyl-cyclohex-3-ene-1-carboxylate + CO2. Its pathway is quinol/quinone metabolism; 1,4-dihydroxy-2-naphthoate biosynthesis; 1,4-dihydroxy-2-naphthoate from chorismate: step 2/7. It functions in the pathway quinol/quinone metabolism; menaquinone biosynthesis. Catalyzes the thiamine diphosphate-dependent decarboxylation of 2-oxoglutarate and the subsequent addition of the resulting succinic semialdehyde-thiamine pyrophosphate anion to isochorismate to yield 2-succinyl-5-enolpyruvyl-6-hydroxy-3-cyclohexene-1-carboxylate (SEPHCHC). In Sorangium cellulosum (strain So ce56) (Polyangium cellulosum (strain So ce56)), this protein is 2-succinyl-5-enolpyruvyl-6-hydroxy-3-cyclohexene-1-carboxylate synthase.